A 508-amino-acid polypeptide reads, in one-letter code: Maturase K (508 aa).

This sequence belongs to the intron maturase 2 family. MatK subfamily.

It is found in the plastid. Its subcellular location is the chloroplast. Its function is as follows. Usually encoded in the trnK tRNA gene intron. Probably assists in splicing its own and other chloroplast group II introns. This Huidobria chilensis (Loasa chilensis) protein is Maturase K.